Here is a 92-residue protein sequence, read N- to C-terminus: RQC P-site tRNA stabilizing factor (92 aa).

The 61-residue stretch at 5–65 (MRLDKYLKVS…GPKIVTAKIE (61 aa)) folds into the S4 RNA-binding domain.

The protein belongs to the RqcP family. As to quaternary structure, associates with stalled 50S ribosomal subunits. Binds to RqcH, 23S rRNA and the P-site tRNA. Does not require RqcH for association with 50S subunits.

Key component of the ribosome quality control system (RQC), a ribosome-associated complex that mediates the extraction of incompletely synthesized nascent chains from stalled ribosomes and their subsequent degradation. RqcH recruits Ala-charged tRNA, and with RqcP directs the elongation of stalled nascent chains on 50S ribosomal subunits, leading to non-templated C-terminal alanine extensions (Ala tail). The Ala tail promotes nascent chain degradation. RqcP is associated with the translocation-like movement of the peptidyl-tRNA from the A-site into the P-site. The protein is RQC P-site tRNA stabilizing factor of Listeria innocua serovar 6a (strain ATCC BAA-680 / CLIP 11262).